The primary structure comprises 272 residues: uncharacterized protein (272 aa).

The protein localises to the periplasm. Its function is as follows. May be involved in ulvan degradation. Ulvan is the main polysaccharide component of the Ulvales (green seaweed) cell wall. It is composed of disaccharide building blocks comprising 3-sulfated rhamnose (Rha3S) linked to D-glucuronic acid (GlcA), L-iduronic acid (IduA), or D-xylose (Xyl). This is an uncharacterized protein from Formosa agariphila (strain DSM 15362 / KCTC 12365 / LMG 23005 / KMM 3901 / M-2Alg 35-1).